A 102-amino-acid chain; its full sequence is Carboxysome shell protein CcmK3 (102 aa).

The BMC domain maps to 4 to 90 (AVGTIQTLGF…PQENVETVMP (87 aa)).

Belongs to the bacterial microcompartments protein family. CcmK subfamily. As to quaternary structure, interacts stably with CcmK4, probably forms heterohexamers with a 1:2 CcmK3:CcmK4 stoichiometry. Bulky residues in the pore region probably preclude the formation of homohexamers by this subunit.

The protein resides in the carboxysome. In terms of biological role, a non-essential, minor shell protein of the carboxysome, a polyhedral inclusion where RuBisCO (ribulose bisphosphate carboxylase, rbcL-rbcS) is sequestered. Hexamers form sheets that form the facets of the polyhedral carboxysome. In PCC 7942 there are several CcmK paralogs with presumably functional differences. This subunit probably only makes heterohexamers with CcmK4. The CcmK3-CcmK4 heterohexmers have been suggested to cap other hexamers, perhaps to alter metabolite flux. The chain is Carboxysome shell protein CcmK3 from Synechococcus elongatus (strain ATCC 33912 / PCC 7942 / FACHB-805) (Anacystis nidulans R2).